The primary structure comprises 412 residues: Gamma-glutamyl phosphate reductase (412 aa).

It belongs to the gamma-glutamyl phosphate reductase family.

It is found in the cytoplasm. The enzyme catalyses L-glutamate 5-semialdehyde + phosphate + NADP(+) = L-glutamyl 5-phosphate + NADPH + H(+). The protein operates within amino-acid biosynthesis; L-proline biosynthesis; L-glutamate 5-semialdehyde from L-glutamate: step 2/2. Functionally, catalyzes the NADPH-dependent reduction of L-glutamate 5-phosphate into L-glutamate 5-semialdehyde and phosphate. The product spontaneously undergoes cyclization to form 1-pyrroline-5-carboxylate. The chain is Gamma-glutamyl phosphate reductase from Nitratiruptor sp. (strain SB155-2).